The primary structure comprises 381 residues: Endophilin-A homolog (381 aa).

The membrane-binding amphipathic helix stretch occupies residues 1-21 (MSLSGLRKQFNKANQYLSETM). Residues 18-247 (SETMGAAEPT…LGHRIKDAAA (230 aa)) enclose the BAR domain. A coiled-coil region spans residues 170-238 (CKKRQQRRDD…QCLENLQQQL (69 aa)). A disordered region spans residues 246–323 (AARPREEHVP…PPPLSQQQKP (78 aa)). The segment covering 260-271 (ANESRTPRSSFR) has biased composition (polar residues). The segment covering 305–317 (YQGPPPGGLPPPL) has biased composition (pro residues). One can recognise an SH3 domain in the interval 320–379 (QQKPQCRALFDFDAQSEGELDFKEGTLIELVSQIDENWYEGRVNGKTGLFPVTYVQVLVP).

This sequence belongs to the endophilin family. In terms of assembly, may form a homodimer (via the BAR domain). In terms of tissue distribution, expressed in neurons and posterior intestine.

The protein resides in the synapse. Its subcellular location is the cytoplasmic vesicle. It is found in the secretory vesicle. It localises to the synaptic vesicle. The protein localises to the membrane. In terms of biological role, involved in synaptic vesicle (SV) recycling in neurons probably by regulating clathrin-mediated endocytosis. By controlling SV endocytosis, regulates the rate of excitatory postsynaptic currents (EPSCs) at neuromuscular junctions and thus locomotion. In a similar manner, involved in necrotic neuronal cell death induced by abnormal hyperactivation of ion channels. Plays a minor role in responses to mechanical stimuli. Plays a minor role in unc-26/synaptojanin localization to synapses. The protein is Endophilin-A homolog of Caenorhabditis elegans.